The chain runs to 356 residues: DNA polymerase IV (356 aa).

In terms of domain architecture, UmuC spans 6 to 186 (IVHIDMDAFY…LPVDAFHGIG (181 aa)). Mg(2+) is bound by residues aspartate 10 and aspartate 104. The active site involves glutamate 105.

Belongs to the DNA polymerase type-Y family. As to quaternary structure, monomer. Mg(2+) serves as cofactor.

Its subcellular location is the cytoplasm. It catalyses the reaction DNA(n) + a 2'-deoxyribonucleoside 5'-triphosphate = DNA(n+1) + diphosphate. Its function is as follows. Poorly processive, error-prone DNA polymerase involved in untargeted mutagenesis. Copies undamaged DNA at stalled replication forks, which arise in vivo from mismatched or misaligned primer ends. These misaligned primers can be extended by PolIV. Exhibits no 3'-5' exonuclease (proofreading) activity. May be involved in translesional synthesis, in conjunction with the beta clamp from PolIII. The protein is DNA polymerase IV of Gluconobacter oxydans (strain 621H) (Gluconobacter suboxydans).